Reading from the N-terminus, the 728-residue chain is Catalase-peroxidase 1 (728 aa).

Residues 91–218 constitute a cross-link (tryptophyl-tyrosyl-methioninium (Trp-Tyr) (with M-244)); sequence WHSAGTYRTA…LAAVQMGLIY (128 aa). H92 acts as the Proton acceptor in catalysis. Residues 218–244 constitute a cross-link (tryptophyl-tyrosyl-methioninium (Tyr-Met) (with W-91)); the sequence is YVNPEGPDGNPDPVAAARDIRDTFARM. Residue H259 participates in heme b binding.

It belongs to the peroxidase family. Peroxidase/catalase subfamily. Homodimer or homotetramer. Requires heme b as cofactor. In terms of processing, formation of the three residue Trp-Tyr-Met cross-link is important for the catalase, but not the peroxidase activity of the enzyme.

The catalysed reaction is H2O2 + AH2 = A + 2 H2O. The enzyme catalyses 2 H2O2 = O2 + 2 H2O. In terms of biological role, bifunctional enzyme with both catalase and broad-spectrum peroxidase activity. This Burkholderia ambifaria (strain MC40-6) protein is Catalase-peroxidase 1.